We begin with the raw amino-acid sequence, 347 residues long: uncharacterized protein (347 aa).

This sequence belongs to the MG067/MG068/MG395 family.

This is an uncharacterized protein from Mycoplasma pneumoniae (strain ATCC 29342 / M129 / Subtype 1) (Mycoplasmoides pneumoniae).